The chain runs to 524 residues: 2-isopropylmalate synthase (524 aa).

Residues 5–267 (VIIFDTTLRD…HTNINHQEIF (263 aa)) form the Pyruvate carboxyltransferase domain. Positions 14, 202, 204, and 238 each coordinate Mn(2+). The interval 392-524 (SLDYFSVQSG…SKHQNNQETV (133 aa)) is regulatory domain.

It belongs to the alpha-IPM synthase/homocitrate synthase family. LeuA type 1 subfamily. As to quaternary structure, homodimer. The cofactor is Mn(2+).

It localises to the cytoplasm. The catalysed reaction is 3-methyl-2-oxobutanoate + acetyl-CoA + H2O = (2S)-2-isopropylmalate + CoA + H(+). Its pathway is amino-acid biosynthesis; L-leucine biosynthesis; L-leucine from 3-methyl-2-oxobutanoate: step 1/4. In terms of biological role, catalyzes the condensation of the acetyl group of acetyl-CoA with 3-methyl-2-oxobutanoate (2-ketoisovalerate) to form 3-carboxy-3-hydroxy-4-methylpentanoate (2-isopropylmalate). The chain is 2-isopropylmalate synthase from Serratia proteamaculans (strain 568).